The sequence spans 261 residues: Cytochrome c oxidase subunit 3 (261 aa).

At 1-15 (MTKQMHAFHMVNPSP) the chain is on the mitochondrial matrix side. A helical transmembrane segment spans residues 16–34 (WPLTGAASAFMLTSGLAMW). Residues 35 to 40 (FHKHSN) lie on the Mitochondrial intermembrane side of the membrane. Residues 41 to 66 (TLIFLSMILMLLTMYQWWRDITREGT) traverse the membrane as a helical segment. Residues 67-72 (FQGHHT) lie on the Mitochondrial matrix side of the membrane. Residues 73–105 (SLVQKSLRYGMILFIVSEVCFFFGFFWTFYHSS) form a helical membrane-spanning segment. The Mitochondrial intermembrane portion of the chain corresponds to 106–128 (LSPSPDLGMMWPPKGVIPLDPFE). The helical transmembrane segment at 129–152 (IPLLNTAILLGSGVSVTWAHHSLM) threads the bilayer. Over 153–155 (EKT) the chain is Mitochondrial matrix. The helical transmembrane segment at 156–183 (HKDMVISLSITIILGIYFTLLQGMEYFN) threads the bilayer. The Mitochondrial intermembrane portion of the chain corresponds to 184 to 190 (STFNISD). The chain crosses the membrane as a helical span at residues 191–223 (NAYGSTFFVATGFHGGHVIIGTLFLTVCLLRQL). Residues 224-232 (MFHFTSSHH) are Mitochondrial matrix-facing. Residues 233-256 (FGFEAAAWYWHFVDVVWLFLFISI) traverse the membrane as a helical segment. Over 257 to 261 (YWWGS) the chain is Mitochondrial intermembrane.

Belongs to the cytochrome c oxidase subunit 3 family. As to quaternary structure, component of the cytochrome c oxidase (complex IV, CIV), a multisubunit enzyme composed of 14 subunits. The complex is composed of a catalytic core of 3 subunits MT-CO1, MT-CO2 and MT-CO3, encoded in the mitochondrial DNA, and 11 supernumerary subunits COX4I, COX5A, COX5B, COX6A, COX6B, COX6C, COX7A, COX7B, COX7C, COX8 and NDUFA4, which are encoded in the nuclear genome. The complex exists as a monomer or a dimer and forms supercomplexes (SCs) in the inner mitochondrial membrane with NADH-ubiquinone oxidoreductase (complex I, CI) and ubiquinol-cytochrome c oxidoreductase (cytochrome b-c1 complex, complex III, CIII), resulting in different assemblies (supercomplex SCI(1)III(2)IV(1) and megacomplex MCI(2)III(2)IV(2)).

The protein localises to the mitochondrion inner membrane. It catalyses the reaction 4 Fe(II)-[cytochrome c] + O2 + 8 H(+)(in) = 4 Fe(III)-[cytochrome c] + 2 H2O + 4 H(+)(out). Its function is as follows. Component of the cytochrome c oxidase, the last enzyme in the mitochondrial electron transport chain which drives oxidative phosphorylation. The respiratory chain contains 3 multisubunit complexes succinate dehydrogenase (complex II, CII), ubiquinol-cytochrome c oxidoreductase (cytochrome b-c1 complex, complex III, CIII) and cytochrome c oxidase (complex IV, CIV), that cooperate to transfer electrons derived from NADH and succinate to molecular oxygen, creating an electrochemical gradient over the inner membrane that drives transmembrane transport and the ATP synthase. Cytochrome c oxidase is the component of the respiratory chain that catalyzes the reduction of oxygen to water. Electrons originating from reduced cytochrome c in the intermembrane space (IMS) are transferred via the dinuclear copper A center (CU(A)) of subunit 2 and heme A of subunit 1 to the active site in subunit 1, a binuclear center (BNC) formed by heme A3 and copper B (CU(B)). The BNC reduces molecular oxygen to 2 water molecules using 4 electrons from cytochrome c in the IMS and 4 protons from the mitochondrial matrix. The protein is Cytochrome c oxidase subunit 3 (MT-CO3) of Myxine glutinosa (Atlantic hagfish).